A 334-amino-acid chain; its full sequence is Fe-S cluster assembly protein DRE2 (334 aa).

The N-terminal SAM-like domain stretch occupies residues 1-131 (MASTKTGLVL…ASIKAEPVAV (131 aa)). The tract at residues 132 to 228 (PLRNHKKTTT…EDELVDENEM (97 aa)) is linker. Residues 135-229 (NHKKTTTPGT…DELVDENEMR (95 aa)) form a disordered region. Residues 140 to 150 (TTPGTTTTAKK) show a composition bias toward low complexity. 2 stretches are compositionally biased toward acidic residues: residues 182–192 (DSEDEDEESEG) and 215–227 (DSIE…DENE). Residues Cys-238, Cys-249, Cys-252, and Cys-254 each coordinate [2Fe-2S] cluster. The fe-S binding site A stretch occupies residues 238–254 (CGKSKTRRRKACKDCTC). Cys-297, Cys-300, Cys-308, and Cys-311 together coordinate [4Fe-4S] cluster. 2 short sequence motifs (cx2C motif) span residues 297–300 (CGSC) and 308–311 (CSGC). The fe-S binding site B stretch occupies residues 297 to 311 (CGSCTLGDAFRCSGC).

Belongs to the anamorsin family. As to quaternary structure, monomer. Interacts with TAH18. Interacts with MIA40. [2Fe-2S] cluster is required as a cofactor. Requires [4Fe-4S] cluster as cofactor.

Its subcellular location is the cytoplasm. The protein resides in the mitochondrion intermembrane space. Component of the cytosolic iron-sulfur (Fe-S) protein assembly (CIA) machinery required for the maturation of extramitochondrial Fe-S proteins. Part of an electron transfer chain functioning in an early step of cytosolic Fe-S biogenesis, facilitating the de novo assembly of a [4Fe-4S] cluster on the scaffold complex CFD1-NBP35. Electrons are transferred to DRE2 from NADPH via the FAD- and FMN-containing protein TAH18. TAH18-DRE2 are also required for the assembly of the diferric tyrosyl radical cofactor of ribonucleotide reductase (RNR), probably by providing electrons for reduction during radical cofactor maturation in the catalytic small subunit RNR2. The sequence is that of Fe-S cluster assembly protein DRE2 from Zygosaccharomyces rouxii (strain ATCC 2623 / CBS 732 / NBRC 1130 / NCYC 568 / NRRL Y-229).